A 206-amino-acid polypeptide reads, in one-letter code: Orotate phosphoribosyltransferase (206 aa).

5-phospho-alpha-D-ribose 1-diphosphate-binding positions include Lys-26, 72 to 73, Arg-99, Lys-100, Lys-103, His-105, and 124 to 132; these read YK and DDVMTSGFS. Residues Thr-128 and Arg-157 each contribute to the orotate site.

Belongs to the purine/pyrimidine phosphoribosyltransferase family. PyrE subfamily. As to quaternary structure, homodimer. Requires Mg(2+) as cofactor.

The enzyme catalyses orotidine 5'-phosphate + diphosphate = orotate + 5-phospho-alpha-D-ribose 1-diphosphate. Its pathway is pyrimidine metabolism; UMP biosynthesis via de novo pathway; UMP from orotate: step 1/2. Functionally, catalyzes the transfer of a ribosyl phosphate group from 5-phosphoribose 1-diphosphate to orotate, leading to the formation of orotidine monophosphate (OMP). The sequence is that of Orotate phosphoribosyltransferase from Buchnera aphidicola subsp. Baizongia pistaciae (strain Bp).